The sequence spans 361 residues: RuBisCO accumulation factor 1 (361 aa).

The N-terminal alpha-helix stretch occupies residues 16-197 (NELAQELLRK…RKQIEQLLVD (182 aa)). Residues 221–347 (PRIVPVVGQL…VIILVRPRRI (127 aa)) are C-terminal beta-sheet.

The protein belongs to the RAF family. As to quaternary structure, homodimer. Forms an RbcL(8)-Raf1(8) complex. Each Raf1 dimer clamps the exterior of an RbcL dimer, protecting it. The extreme C-terminus (residues 354-361) inserts into the catalytic pocket of RbcL where the Glu-361 forms a salt bridge with 'Lys-202'. This insertion probably contributes to the assembly of RbcL(8). Forms complexes of many stoichiometries with RbcL with and without RbcS. RbcX and Raf1 can bind simultaneously to RbcL.

It localises to the cytoplasm. A major RuBisCO chaperone. Acts after GroEL-GroES chaperonin to fold and/or assemble the large subunit of RuBisCO (ccbL, rbcL). Cooperates with RbcX in RbcL folding, plays the major role in assembly of dimers into RbcL(8)-Raf1(8) intermediate complexes. RbcS replaces Raf1, leading to holoenzyme formation. Its function is as follows. In vitro acts as an antagonist to CcmM35, suggesting it might regulate RuBisCO condensation and decondensation. In Nostoc sp. (strain PCC 7120 / SAG 25.82 / UTEX 2576), this protein is RuBisCO accumulation factor 1.